Here is a 215-residue protein sequence, read N- to C-terminus: Ras-related protein Rab-5A (215 aa).

Residues Ser-29, Ala-30, Gly-32, Lys-33, Ser-34, Ser-35, His-46, Glu-47, Thr-52, and Gly-78 each coordinate GTP. Residue Ser-34 participates in Mg(2+) binding. Short sequence motifs (switch) lie at residues 44–56 (QFHE…IGAA) and 77–93 (AGQE…YRGA). A Mg(2+)-binding site is contributed by Thr-52. At Ser-84 the chain carries Phosphoserine. Positions 133, 134, 136, 164, and 165 each coordinate GTP. Residues 181–215 (LPKNEPQNPGANSARGRGVDLTEPAQPARSQCCSN) form a disordered region. S-geranylgeranyl cysteine attachment occurs at residues Cys-212 and Cys-213.

This sequence belongs to the small GTPase superfamily. Rab family. As to quaternary structure, interacts with GDI1; this promotes dissociation from membranes; phosphorylation at Ser-84 disrupts this interaction. Interacts with GDI2; phosphorylation at Ser-84 disrupts the interaction. Interacts with EEA1. Interacts with RIN1 and GAPVD1, which regulate its pathway, probably by acting as a GEF. Interacts with ALS2CL, SUN2, ZFYVE20 and RUFY1. Interacts with RABEP1; one RABEP1 homodimer binds two RAB5A chains, but at opposite sides of the dimer. Interacts with SGSM1, SGSM3 and PIK3CB. Interacts with RINL. May be a component of a complex composed of RAB5A, DYN2 and PIK3C3. Does not interact with the BLOC-3 complex (heterodimer of HPS1 and HPS4). Interacts with CLN5. Interacts with APPL2. Interacts with F8A1/F8A2/F8A3. Found in a complex with F8A1/F8A2/F8A3, HTT and RAB5A; mediates the recruitment of HTT by RAB5A onto early endosomes. Interacts with ATP9A. Interacts with PPP1R21; mediates the recruitment of FERRY complex by RAB5A onto early endosomes. The cofactor is Mg(2+). Post-translationally, phosphorylation of Ser-84 in the switch II region by LRRK2 prevents the association of RAB regulatory proteins, including RAB GDP dissociation inhibitors GDI1 and GDI2.

The protein resides in the cell membrane. Its subcellular location is the early endosome membrane. The protein localises to the melanosome. It is found in the cytoplasmic vesicle. It localises to the cell projection. The protein resides in the ruffle. Its subcellular location is the membrane. The protein localises to the cytoplasm. It is found in the cytosol. It localises to the phagosome membrane. The protein resides in the endosome membrane. It catalyses the reaction GTP + H2O = GDP + phosphate + H(+). Regulated by guanine nucleotide exchange factors (GEFs) including RINL, which promote the exchange of bound GDP for free GTP. Regulated by GTPase activating proteins (GAPs) which increase the GTP hydrolysis activity. Inhibited by GDP dissociation inhibitors (GDIs). Functionally, the small GTPases Rab are key regulators of intracellular membrane trafficking, from the formation of transport vesicles to their fusion with membranes. Rabs cycle between an inactive GDP-bound form and an active GTP-bound form that is able to recruit to membranes different sets of downstream effectors directly responsible for vesicle formation, movement, tethering and fusion. RAB5A is required for the fusion of plasma membranes and early endosomes. Contributes to the regulation of filopodia extension. Required for the exosomal release of SDCBP, CD63, PDCD6IP and syndecan. Regulates maturation of apoptotic cell-containing phagosomes, probably downstream of DYN2 and PIK3C3. The sequence is that of Ras-related protein Rab-5A from Rattus norvegicus (Rat).